Here is a 390-residue protein sequence, read N- to C-terminus: Glutamate 5-kinase (390 aa).

Lys29 provides a ligand contact to ATP. The substrate site is built by Ser69, Asp156, and Asn168. 188-189 (TD) serves as a coordination point for ATP. Positions 295 to 374 (SGSLIVDAGA…EQFDRILGNN (80 aa)) constitute a PUA domain.

It belongs to the glutamate 5-kinase family.

It is found in the cytoplasm. The enzyme catalyses L-glutamate + ATP = L-glutamyl 5-phosphate + ADP. The protein operates within amino-acid biosynthesis; L-proline biosynthesis; L-glutamate 5-semialdehyde from L-glutamate: step 1/2. Catalyzes the transfer of a phosphate group to glutamate to form L-glutamate 5-phosphate. The protein is Glutamate 5-kinase of Psychrobacter cryohalolentis (strain ATCC BAA-1226 / DSM 17306 / VKM B-2378 / K5).